Here is a 169-residue protein sequence, read N- to C-terminus: Sorting nexin-24 (169 aa).

M1 is modified (N-acetylmethionine). One can recognise a PX domain in the interval M1 to S125. A 1,2-diacyl-sn-glycero-3-phospho-(1D-myo-inositol-3-phosphate)-binding residues include R38, S40, K61, and R74. Residues S113 and S116 each carry the phosphoserine modification.

The protein belongs to the sorting nexin family.

It is found in the cytoplasmic vesicle membrane. Its function is as follows. May be involved in several stages of intracellular trafficking. This is Sorting nexin-24 (SNX24) from Bos taurus (Bovine).